The sequence spans 119 residues: Large ribosomal subunit protein bL20 (119 aa).

Belongs to the bacterial ribosomal protein bL20 family.

Its function is as follows. Binds directly to 23S ribosomal RNA and is necessary for the in vitro assembly process of the 50S ribosomal subunit. It is not involved in the protein synthesizing functions of that subunit. This Colwellia psychrerythraea (strain 34H / ATCC BAA-681) (Vibrio psychroerythus) protein is Large ribosomal subunit protein bL20.